The sequence spans 69 residues: Cytochrome c oxidase subunit 8A, mitochondrial (69 aa).

The transit peptide at 1-25 (MSVLTPLLLRGLTGSARRLPVLRAQ) directs the protein to the mitochondrion. Residues 2-19 (SVLTPLLLRGLTGSARRL) carry the SIFI-degron motif. Residues 26–36 (VHSKPPREKLG) lie on the Mitochondrial matrix side of the membrane. Residues 37-60 (TMDVAIGLTSCFVCFLLPSGWVLS) form a helical membrane-spanning segment. Over 61–69 (HLETYKKRE) the chain is Mitochondrial intermembrane.

The protein belongs to the cytochrome c oxidase VIII family. Component of the cytochrome c oxidase (complex IV, CIV), a multisubunit enzyme composed of 14 subunits. The complex is composed of a catalytic core of 3 subunits MT-CO1, MT-CO2 and MT-CO3, encoded in the mitochondrial DNA, and 11 supernumerary subunits COX4I, COX5A, COX5B, COX6A, COX6B, COX6C, COX7A, COX7B, COX7C, COX8 and NDUFA4, which are encoded in the nuclear genome. The complex exists as a monomer or a dimer and forms supercomplexes (SCs) in the inner mitochondrial membrane with NADH-ubiquinone oxidoreductase (complex I, CI) and ubiquinol-cytochrome c oxidoreductase (cytochrome b-c1 complex, complex III, CIII), resulting in different assemblies (supercomplex SCI(1)III(2)IV(1) and megacomplex MCI(2)III(2)IV(2)). In terms of processing, in response to mitochondrial stress, the precursor protein is ubiquitinated by the SIFI complex in the cytoplasm before mitochondrial import, leading to its degradation. Within the SIFI complex, UBR4 initiates ubiquitin chain that are further elongated or branched by KCMF1.

The protein resides in the mitochondrion inner membrane. The protein operates within energy metabolism; oxidative phosphorylation. Functionally, component of the cytochrome c oxidase, the last enzyme in the mitochondrial electron transport chain which drives oxidative phosphorylation. The respiratory chain contains 3 multisubunit complexes succinate dehydrogenase (complex II, CII), ubiquinol-cytochrome c oxidoreductase (cytochrome b-c1 complex, complex III, CIII) and cytochrome c oxidase (complex IV, CIV), that cooperate to transfer electrons derived from NADH and succinate to molecular oxygen, creating an electrochemical gradient over the inner membrane that drives transmembrane transport and the ATP synthase. Cytochrome c oxidase is the component of the respiratory chain that catalyzes the reduction of oxygen to water. Electrons originating from reduced cytochrome c in the intermembrane space (IMS) are transferred via the dinuclear copper A center (CU(A)) of subunit 2 and heme A of subunit 1 to the active site in subunit 1, a binuclear center (BNC) formed by heme A3 and copper B (CU(B)). The BNC reduces molecular oxygen to 2 water molecules using 4 electrons from cytochrome c in the IMS and 4 protons from the mitochondrial matrix. This is Cytochrome c oxidase subunit 8A, mitochondrial (COX8A) from Eulemur fulvus fulvus (Brown lemur).